Reading from the N-terminus, the 300-residue chain is Putative hydro-lyase Dshi_3152 (300 aa).

This sequence belongs to the D-glutamate cyclase family.

The polypeptide is Putative hydro-lyase Dshi_3152 (Dinoroseobacter shibae (strain DSM 16493 / NCIMB 14021 / DFL 12)).